A 23-amino-acid chain; its full sequence is MWTKPAYTDLRIGFEVTMYFANR.

Residues 15–19 (EVTMY) constitute a cross-link (pyrroloquinoline quinone (Glu-Tyr)).

Belongs to the PqqA family.

It participates in cofactor biosynthesis; pyrroloquinoline quinone biosynthesis. Functionally, required for coenzyme pyrroloquinoline quinone (PQQ) biosynthesis. PQQ is probably formed by cross-linking a specific glutamate to a specific tyrosine residue and excising these residues from the peptide. In Ectopseudomonas mendocina (strain ymp) (Pseudomonas mendocina), this protein is Coenzyme PQQ synthesis protein A.